The sequence spans 307 residues: Ribosomal RNA small subunit methyltransferase H (307 aa).

S-adenosyl-L-methionine is bound by residues 33–35, D51, F78, D96, and Q103; that span reads GGY.

This sequence belongs to the methyltransferase superfamily. RsmH family.

It localises to the cytoplasm. The enzyme catalyses cytidine(1402) in 16S rRNA + S-adenosyl-L-methionine = N(4)-methylcytidine(1402) in 16S rRNA + S-adenosyl-L-homocysteine + H(+). Specifically methylates the N4 position of cytidine in position 1402 (C1402) of 16S rRNA. The chain is Ribosomal RNA small subunit methyltransferase H from Rickettsia conorii (strain ATCC VR-613 / Malish 7).